The primary structure comprises 276 residues: Radial spoke head protein 9 homolog (276 aa).

The protein belongs to the flagellar radial spoke RSP9 family. In terms of assembly, component of the axonemal radial spoke 1 (RS1) and 2 (RS2) complexes, at least composed of spoke head proteins RSPH1, RSPH3, RSPH9 and the cilia-specific component RSPH4A or sperm-specific component RSPH6A, spoke stalk proteins RSPH14, DNAJB13, DYDC1, ROPN1L and NME5, and the RS1 complex-specific anchor protein IQUB. Interacts with IQUB. Interacts with RSPH3B. Interacts with RSPH4A. Interacts with RSPH6A. Interacts with CFAP61. Interacts with LRRC23. In terms of tissue distribution, expressed in the testis, trachea, lung, oviduct and ependymal cells (at protein level).

The protein localises to the cytoplasm. The protein resides in the cytoskeleton. It localises to the cilium axoneme. It is found in the flagellum axoneme. Its subcellular location is the cell projection. The protein localises to the kinocilium. Functions as part of axonemal radial spoke complexes that play an important part in the motility of sperm and cilia. Essential for both the radial spoke head assembly and the central pair microtubule stability in ependymal motile cilia. Required for motility of olfactory and neural cilia and for the structural integrity of ciliary axonemes in both 9+0 and 9+2 motile cilia. The polypeptide is Radial spoke head protein 9 homolog (Rsph9) (Mus musculus (Mouse)).